We begin with the raw amino-acid sequence, 153 residues long: Small ribosomal subunit protein bS16 (153 aa).

This sequence belongs to the bacterial ribosomal protein bS16 family.

The sequence is that of Small ribosomal subunit protein bS16 from Leifsonia xyli subsp. xyli (strain CTCB07).